We begin with the raw amino-acid sequence, 287 residues long: Zinc finger protein SNAI3 (287 aa).

The interval 1–20 (MPRSFLVKTHSSHRVPNYGK) is SNAG domain. C2H2-type zinc fingers lie at residues 147 to 169 (FECI…QQLH), 178 to 200 (FTCR…IRTH), 204 to 226 (CICK…IRTH), and 232 to 254 (YTCS…LQTH). Residues 260 to 282 (YRCAVCPKAFSRMSLLARHEEAG) form a C2H2-type 5; degenerate zinc finger.

It belongs to the snail C2H2-type zinc-finger protein family. In terms of tissue distribution, highly expressed in skeletal muscle and thymus. Lower expression in heart, lung and spleen.

It is found in the nucleus. Its function is as follows. Seems to inhibit myoblast differentiation. Transcriptional repressor of E-box-dependent transactivation of downstream myogenic bHLHs genes. Binds preferentially to the canonical E-box sequences 5'-CAGGTG-3' and 5'-CACCTG-3'. This is Zinc finger protein SNAI3 (Snai3) from Mus musculus (Mouse).